The following is a 345-amino-acid chain: Dimethyladenosine transferase 1, mitochondrial (345 aa).

The N-terminal 27 residues, 1–27 (MAASGKLGTFRLPPLPTIREIIKLFGL), are a transit peptide targeting the mitochondrion. Residues 35–38 (QNFL), asparagine 36, leucine 38, glycine 63, glutamate 85, aspartate 111, and asparagine 141 each bind S-adenosyl-L-methionine.

It belongs to the class I-like SAM-binding methyltransferase superfamily. rRNA adenine N(6)-methyltransferase family. KsgA subfamily. As to quaternary structure, interacts with mitochondrial RNA polymerase POLRMT. Interacts with TFAM.

The protein localises to the mitochondrion. S-adenosyl-L-methionine-dependent methyltransferase which specifically dimethylates mitochondrial 12S rRNA at the conserved stem loop. Also required for basal transcription of mitochondrial DNA, probably via its interaction with POLRMT and TFAM. Stimulates transcription independently of the methyltransferase activity. This chain is Dimethyladenosine transferase 1, mitochondrial (Tfb1m), found in Rattus norvegicus (Rat).